We begin with the raw amino-acid sequence, 166 residues long: Urease accessory protein UreE (166 aa).

It belongs to the UreE family.

Its subcellular location is the cytoplasm. In terms of biological role, involved in urease metallocenter assembly. Binds nickel. Probably functions as a nickel donor during metallocenter assembly. This Pseudomonas savastanoi pv. phaseolicola (strain 1448A / Race 6) (Pseudomonas syringae pv. phaseolicola (strain 1448A / Race 6)) protein is Urease accessory protein UreE.